Consider the following 87-residue polypeptide: QADKYPAGLNPALCPNYPNCDNALIALYSNVAPAIPYAAAYNYPAGVSPAACPNYPFCGAIAPLGYHVREYPAGVHPAACPNYPYCV.

Residue Q1 is modified to Pyrrolidone carboxylic acid. Tandem repeats lie at residues Y5–C20, Y43–C58, and Y71–C86. 3 disulfides stabilise this stretch: C14–C20, C52–C58, and C80–C86.

This is Cuticle protein 1 from Blaberus craniifer (Death's head cockroach).